The sequence spans 45 residues: Thymosin beta (45 aa).

Residues 1–45 (MADKPNMTEITSFDKTKLRKTETQEKNPLPTKETIEQERQGESTP) form a disordered region. Basic and acidic residues-rich tracts occupy residues 12 to 25 (SFDKTKLRKTETQE) and 33 to 45 (ETIEQERQGESTP).

This sequence belongs to the thymosin beta family.

Its subcellular location is the cytoplasm. It is found in the cytoskeleton. Plays an important role in the organization of the cytoskeleton. Binds to and sequesters actin monomers (G actin) and therefore inhibits actin polymerization. The protein is Thymosin beta (tmsb) of Danio rerio (Zebrafish).